The chain runs to 293 residues: Homoserine kinase (293 aa).

83-93 (RPKSGLGSSGA) contributes to the ATP binding site.

It belongs to the GHMP kinase family. Homoserine kinase subfamily.

The protein resides in the cytoplasm. It catalyses the reaction L-homoserine + ATP = O-phospho-L-homoserine + ADP + H(+). It participates in amino-acid biosynthesis; L-threonine biosynthesis; L-threonine from L-aspartate: step 4/5. Its function is as follows. Catalyzes the ATP-dependent phosphorylation of L-homoserine to L-homoserine phosphate. In Pyrococcus horikoshii (strain ATCC 700860 / DSM 12428 / JCM 9974 / NBRC 100139 / OT-3), this protein is Homoserine kinase.